Here is a 1485-residue protein sequence, read N- to C-terminus: Chromosome partition protein MukB (1485 aa).

34–41 provides a ligand contact to ATP; that stretch reads GGNGAGKS. Coiled coils occupy residues 311-480 and 519-665; these read EMAR…EAYR and GARL…RLSQ. The segment at 666 to 783 is flexible hinge; sequence PGGAEDARLI…SLPLFGRAAR (118 aa). Coiled-coil stretches lie at residues 832–1115 and 1209–1265; these read NDPE…QAKA and IDAI…LQSV.

The protein belongs to the SMC family. MukB subfamily. In terms of assembly, homodimerization via its hinge domain. Binds to DNA via its C-terminal region. Interacts, and probably forms a ternary complex, with MukE and MukF via its C-terminal region. The complex formation is stimulated by calcium or magnesium. Interacts with tubulin-related protein FtsZ.

The protein localises to the cytoplasm. The protein resides in the nucleoid. In terms of biological role, plays a central role in chromosome condensation, segregation and cell cycle progression. Functions as a homodimer, which is essential for chromosome partition. Involved in negative DNA supercoiling in vivo, and by this means organize and compact chromosomes. May achieve or facilitate chromosome segregation by condensation DNA from both sides of a centrally located replisome during cell division. The protein is Chromosome partition protein MukB of Edwardsiella ictaluri (strain 93-146).